The sequence spans 328 residues: UPF0421 protein SERP1427 (328 aa).

Transmembrane regions (helical) follow at residues 26–46 (LFCMLLNLTPIFAILTAIVTI), 61–81 (LPATVIGALFAVVFTYVFGDQ), 109–129 (AVLTSVAMIPGIHEAYVFNFF), and 132–152 (LLTALIGLVTAGLVNFIILPP).

It belongs to the UPF0421 family.

It localises to the cell membrane. The protein is UPF0421 protein SERP1427 of Staphylococcus epidermidis (strain ATCC 35984 / DSM 28319 / BCRC 17069 / CCUG 31568 / BM 3577 / RP62A).